We begin with the raw amino-acid sequence, 232 residues long: LexA repressor (232 aa).

Residues 26-46 (FDEMKDALDLRSKSGIHRLIT) constitute a DNA-binding region (H-T-H motif). Residues Ser-153 and Lys-191 each act as for autocatalytic cleavage activity in the active site.

It belongs to the peptidase S24 family. In terms of assembly, homodimer.

It carries out the reaction Hydrolysis of Ala-|-Gly bond in repressor LexA.. In terms of biological role, represses a number of genes involved in the response to DNA damage (SOS response), including recA and lexA. In the presence of single-stranded DNA, RecA interacts with LexA causing an autocatalytic cleavage which disrupts the DNA-binding part of LexA, leading to derepression of the SOS regulon and eventually DNA repair. The chain is LexA repressor from Bradyrhizobium sp. (strain BTAi1 / ATCC BAA-1182).